Consider the following 198-residue polypeptide: Ribonuclease HII (198 aa).

The region spanning 10–198 (QLVAGVDEVG…PVKRALGLAS (189 aa)) is the RNase H type-2 domain. 3 residues coordinate a divalent metal cation: D16, E17, and D108.

It belongs to the RNase HII family. Mn(2+) is required as a cofactor. The cofactor is Mg(2+).

It localises to the cytoplasm. The enzyme catalyses Endonucleolytic cleavage to 5'-phosphomonoester.. Functionally, endonuclease that specifically degrades the RNA of RNA-DNA hybrids. The protein is Ribonuclease HII of Shigella boydii serotype 4 (strain Sb227).